A 102-amino-acid chain; its full sequence is MARQKIRIRLKAFDHRVLDQSSQKIVDTARRTGAVVSGPIPLPTEKNIFTILRSPHVNKDSREQFEMRTHKRLIDILEPTPKTVDALMRLDLPAGVDIEIKL.

The protein belongs to the universal ribosomal protein uS10 family. In terms of assembly, part of the 30S ribosomal subunit.

Functionally, involved in the binding of tRNA to the ribosomes. The chain is Small ribosomal subunit protein uS10 from Moorella thermoacetica (strain ATCC 39073 / JCM 9320).